We begin with the raw amino-acid sequence, 213 residues long: GTP cyclohydrolase 1 (213 aa).

Residues Cys104, His107, and Cys175 each coordinate Zn(2+).

This sequence belongs to the GTP cyclohydrolase I family. As to quaternary structure, homomer.

The enzyme catalyses GTP + H2O = 7,8-dihydroneopterin 3'-triphosphate + formate + H(+). Its pathway is cofactor biosynthesis; 7,8-dihydroneopterin triphosphate biosynthesis; 7,8-dihydroneopterin triphosphate from GTP: step 1/1. This is GTP cyclohydrolase 1 from Brucella suis (strain ATCC 23445 / NCTC 10510).